Consider the following 150-residue polypeptide: Putative HTH-type transcriptional regulator rrf2-like (150 aa).

Positions 1 to 139 constitute an HTH rrf2-type domain; it reads MITQKMKYAL…DSLTLEDMLA (139 aa).

The polypeptide is Putative HTH-type transcriptional regulator rrf2-like (Rhodobacter capsulatus (strain ATCC BAA-309 / NBRC 16581 / SB1003)).